Here is a 478-residue protein sequence, read N- to C-terminus: ATP synthase subunit beta (478 aa).

160–167 (GGAGVGKT) serves as a coordination point for ATP.

This sequence belongs to the ATPase alpha/beta chains family. In terms of assembly, F-type ATPases have 2 components, CF(1) - the catalytic core - and CF(0) - the membrane proton channel. CF(1) has five subunits: alpha(3), beta(3), gamma(1), delta(1), epsilon(1). CF(0) has three main subunits: a(1), b(2) and c(9-12). The alpha and beta chains form an alternating ring which encloses part of the gamma chain. CF(1) is attached to CF(0) by a central stalk formed by the gamma and epsilon chains, while a peripheral stalk is formed by the delta and b chains.

It localises to the cell inner membrane. The enzyme catalyses ATP + H2O + 4 H(+)(in) = ADP + phosphate + 5 H(+)(out). Produces ATP from ADP in the presence of a proton gradient across the membrane. The catalytic sites are hosted primarily by the beta subunits. The protein is ATP synthase subunit beta of Orientia tsutsugamushi (strain Boryong) (Rickettsia tsutsugamushi).